The chain runs to 182 residues: CDP-diacylglycerol--glycerol-3-phosphate 3-phosphatidyltransferase (182 aa).

Topologically, residues 2–12 (QFNIPTLLTLF) are cytoplasmic. Residues 13–37 (RVALIPFFVLAFYLPFVWAPLLCAL) form a helical membrane-spanning segment. The Periplasmic portion of the chain corresponds to 38-60 (IFVFAAVTDWFDGFLARRWKQTT). Residues 61–81 (RFGAFLDPVADKVMVAVALVL) form a helical membrane-spanning segment. Residues 82–86 (VAEYY) are Cytoplasmic-facing. Residues 87 to 107 (HSWWITLPAATMIAREIIISA) traverse the membrane as a helical segment. Topologically, residues 108 to 145 (LREWMAEIGKRSSVAVSWIGKVKTTAQMMALFALLWRP) are periplasmic. Residues 146 to 168 (ERIVEGIGVAALYIAAVLTFWSM) form a helical membrane-spanning segment. Residues 169 to 181 (FQYLNAARHDLLE) lie on the Cytoplasmic side of the membrane.

The protein belongs to the CDP-alcohol phosphatidyltransferase class-I family.

It localises to the cell inner membrane. The enzyme catalyses a CDP-1,2-diacyl-sn-glycerol + sn-glycerol 3-phosphate = a 1,2-diacyl-sn-glycero-3-phospho-(1'-sn-glycero-3'-phosphate) + CMP + H(+). Its pathway is phospholipid metabolism; phosphatidylglycerol biosynthesis; phosphatidylglycerol from CDP-diacylglycerol: step 1/2. Catalyzes the conversion of cytidine diphosphate diacylglycerol (CDP-DG) and glycerol 3-phosphate into phosphatidylglycerol. Essential for the synthesis of anionic phospholipids, thereby playing a role in balancing the ratio of zwitterionic and anionic phospholipids, which is thought to be important for normal membrane function. The polypeptide is CDP-diacylglycerol--glycerol-3-phosphate 3-phosphatidyltransferase (Pectobacterium atrosepticum (strain SCRI 1043 / ATCC BAA-672) (Erwinia carotovora subsp. atroseptica)).